The primary structure comprises 152 residues: Protein Smg homolog (152 aa).

It belongs to the Smg family.

This is Protein Smg homolog from Chromobacterium violaceum (strain ATCC 12472 / DSM 30191 / JCM 1249 / CCUG 213 / NBRC 12614 / NCIMB 9131 / NCTC 9757 / MK).